The following is a 267-amino-acid chain: Acetylglutamate kinase (267 aa).

Residues 53–54 (GG), Arg-75, and Asn-167 each bind substrate.

Belongs to the acetylglutamate kinase family. ArgB subfamily.

It localises to the cytoplasm. It catalyses the reaction N-acetyl-L-glutamate + ATP = N-acetyl-L-glutamyl 5-phosphate + ADP. Its pathway is amino-acid biosynthesis; L-arginine biosynthesis; N(2)-acetyl-L-ornithine from L-glutamate: step 2/4. In terms of biological role, catalyzes the ATP-dependent phosphorylation of N-acetyl-L-glutamate. The polypeptide is Acetylglutamate kinase (Shewanella pealeana (strain ATCC 700345 / ANG-SQ1)).